The chain runs to 260 residues: Hydroxyethylthiazole kinase (260 aa).

Met38 lines the substrate pocket. 2 residues coordinate ATP: Arg114 and Thr159. Gly186 contributes to the substrate binding site.

The protein belongs to the Thz kinase family. Mg(2+) is required as a cofactor.

It catalyses the reaction 5-(2-hydroxyethyl)-4-methylthiazole + ATP = 4-methyl-5-(2-phosphooxyethyl)-thiazole + ADP + H(+). The protein operates within cofactor biosynthesis; thiamine diphosphate biosynthesis; 4-methyl-5-(2-phosphoethyl)-thiazole from 5-(2-hydroxyethyl)-4-methylthiazole: step 1/1. Functionally, catalyzes the phosphorylation of the hydroxyl group of 4-methyl-5-beta-hydroxyethylthiazole (THZ). The chain is Hydroxyethylthiazole kinase from Helicobacter pylori (strain G27).